Reading from the N-terminus, the 301-residue chain is Putative phosphoenolpyruvate synthase regulatory protein (301 aa).

Positions 1–24 (MSEPVAPDGAQPAPAGATPQPLQP) are enriched in low complexity. The segment at 1-27 (MSEPVAPDGAQPAPAGATPQPLQPIAG) is disordered. An ADP-binding site is contributed by 181–188 (GVSRSGKT).

This sequence belongs to the pyruvate, phosphate/water dikinase regulatory protein family. PSRP subfamily.

The enzyme catalyses [pyruvate, water dikinase] + ADP = [pyruvate, water dikinase]-phosphate + AMP + H(+). It carries out the reaction [pyruvate, water dikinase]-phosphate + phosphate + H(+) = [pyruvate, water dikinase] + diphosphate. Its function is as follows. Bifunctional serine/threonine kinase and phosphorylase involved in the regulation of the phosphoenolpyruvate synthase (PEPS) by catalyzing its phosphorylation/dephosphorylation. The polypeptide is Putative phosphoenolpyruvate synthase regulatory protein (Cupriavidus pinatubonensis (strain JMP 134 / LMG 1197) (Cupriavidus necator (strain JMP 134))).